A 576-amino-acid chain; its full sequence is Arginine--tRNA ligase (576 aa).

Positions 122 to 132 (PNVAKEMHVGH) match the 'HIGH' region motif.

This sequence belongs to the class-I aminoacyl-tRNA synthetase family. In terms of assembly, monomer.

The protein resides in the cytoplasm. It catalyses the reaction tRNA(Arg) + L-arginine + ATP = L-arginyl-tRNA(Arg) + AMP + diphosphate. The polypeptide is Arginine--tRNA ligase (Mannheimia succiniciproducens (strain KCTC 0769BP / MBEL55E)).